A 180-amino-acid polypeptide reads, in one-letter code: Endoribonuclease YbeY (180 aa).

Residues histidine 118, histidine 122, and histidine 128 each contribute to the Zn(2+) site.

It belongs to the endoribonuclease YbeY family. It depends on Zn(2+) as a cofactor.

The protein localises to the cytoplasm. Functionally, single strand-specific metallo-endoribonuclease involved in late-stage 70S ribosome quality control and in maturation of the 3' terminus of the 16S rRNA. In Rhodococcus jostii (strain RHA1), this protein is Endoribonuclease YbeY.